The following is a 664-amino-acid chain: ATP synthase subunit alpha 2 (664 aa).

180–187 (GDRATGKT) contributes to the ATP binding site. Positions 525 to 664 (MPAEDAAGDI…DAEAEARHKR (140 aa)) are disordered. Basic and acidic residues predominate over residues 543 to 588 (ARGDADRDADHGANREVSREVSPEASREVSREVSCEVSHEADRDAA). Residues 589-599 (ADAARVAGRAP) are compositionally biased toward low complexity. A compositionally biased stretch (basic and acidic residues) spans 621–639 (ADGDRASASRPRPDARGDA).

The protein belongs to the ATPase alpha/beta chains family. In terms of assembly, F-type ATPases have 2 components, CF(1) - the catalytic core - and CF(0) - the membrane proton channel. CF(1) has five subunits: alpha(3), beta(3), gamma(1), delta(1), epsilon(1). CF(0) has three main subunits: a(1), b(2) and c(9-12). The alpha and beta chains form an alternating ring which encloses part of the gamma chain. CF(1) is attached to CF(0) by a central stalk formed by the gamma and epsilon chains, while a peripheral stalk is formed by the delta and b chains.

The protein localises to the cell inner membrane. The enzyme catalyses ATP + H2O + 4 H(+)(in) = ADP + phosphate + 5 H(+)(out). Its function is as follows. Produces ATP from ADP in the presence of a proton gradient across the membrane. The alpha chain is a regulatory subunit. This is ATP synthase subunit alpha 2 from Burkholderia pseudomallei (strain 1710b).